Here is a 247-residue protein sequence, read N- to C-terminus: Orotidine 5'-phosphate decarboxylase (247 aa).

Substrate-binding positions include D21, K43, 70 to 79 (DMKFHDIPNT), T129, R190, Q199, G219, and R220. The active-site Proton donor is the K72.

The protein belongs to the OMP decarboxylase family. Type 1 subfamily. Homodimer.

The catalysed reaction is orotidine 5'-phosphate + H(+) = UMP + CO2. It participates in pyrimidine metabolism; UMP biosynthesis via de novo pathway; UMP from orotate: step 2/2. Its function is as follows. Catalyzes the decarboxylation of orotidine 5'-monophosphate (OMP) to uridine 5'-monophosphate (UMP). The polypeptide is Orotidine 5'-phosphate decarboxylase (Chromobacterium violaceum (strain ATCC 12472 / DSM 30191 / JCM 1249 / CCUG 213 / NBRC 12614 / NCIMB 9131 / NCTC 9757 / MK)).